A 657-amino-acid polypeptide reads, in one-letter code: MTQLAIGKPAPLGAHYDGQGVNFTLFSAHAERVELCVFDANGQEHRYDLPGHSGDIWHGYLPDARPGLRYGYRVHGPWQPAEGHRFNPAKLLIDPCARQIDGEFKDNPLLHAGHNEPDYRDNAAIAPKCVVVVDHYDWEDDAPPRTPWGSTIIYEAHVKGLTYLHPEIPVEIRGTYKALGHPVMINYLKQLGITALELLPVAQFASEPRLQRMGLSNYWGYNPVAMFALHPAYACSPETALHEFRDAIKALHKAGIEVILDIVLNHSAELDLDGPLFSLRGIDNRSYYWIREDGDYHNWTGCGNTLNLSHPAVVDYASACLRYWVETCHVDGFRFDLAAVMGRTPEFRQDAPLFTAIQNCPVLSQVKLIAEPWDIAPGGYQVGNFPPLFAEWNDHFRDAARRFWLHYDLPLGAFAGRFAASSDVFKRNGRLPSAAINLVTAHDGFTLRDCVCFNHKHNEANGEENRDGTNNNYSNNHGKEGLGGSLDLVERRRDSIHALLTTLLLSQGTPMLLAGDEHGHSQHGNNNAYCQDNQLTWLDWSQASSGLTAFTAALIHLRKRIPALVENRWWEEGDGNVRWLNRYAQPLSTDEWQNGPKQLQILLSDRFLIAINATLEVTEIVLPAGEWHAIPPFAGEDNPVITAVWQGPAHGLCVFQR.

Catalysis depends on Asp-336, which acts as the Nucleophile. Glu-371 serves as the catalytic Proton donor. Residues 458–467 (NEANGEENRD) show a composition bias toward basic and acidic residues. A disordered region spans residues 458-479 (NEANGEENRDGTNNNYSNNHGK).

Belongs to the glycosyl hydrolase 13 family.

It catalyses the reaction Hydrolysis of (1-&gt;6)-alpha-D-glucosidic linkages to branches with degrees of polymerization of three or four glucose residues in limit dextrin.. It functions in the pathway glycan degradation; glycogen degradation. Its function is as follows. Removes maltotriose and maltotetraose chains that are attached by 1,6-alpha-linkage to the limit dextrin main chain, generating a debranched limit dextrin. This is Glycogen debranching enzyme from Escherichia coli O8 (strain IAI1).